A 351-amino-acid chain; its full sequence is Cobalt-precorrin-5B C(1)-methyltransferase (351 aa).

The protein belongs to the CbiD family.

The catalysed reaction is Co-precorrin-5B + S-adenosyl-L-methionine = Co-precorrin-6A + S-adenosyl-L-homocysteine. The protein operates within cofactor biosynthesis; adenosylcobalamin biosynthesis; cob(II)yrinate a,c-diamide from sirohydrochlorin (anaerobic route): step 6/10. Its function is as follows. Catalyzes the methylation of C-1 in cobalt-precorrin-5B to form cobalt-precorrin-6A. In Thermosipho africanus (strain TCF52B), this protein is Cobalt-precorrin-5B C(1)-methyltransferase.